The chain runs to 284 residues: Tropomyosin alpha-1 chain (284 aa).

An N-acetylmethionine modification is found at Met1. Positions 1–40 (MDAIKKKMQMLKLDKENALDRAEQAESDKKASEDRSKQLE) are disordered. Residues 1–284 (MDAIKKKMQM…DHALNDMTSI (284 aa)) adopt a coiled-coil conformation. The segment covering 12-40 (KLDKENALDRAEQAESDKKASEDRSKQLE) has biased composition (basic and acidic residues).

Homodimer. Heterodimer of an alpha (TPM1, TPM3 or TPM4) and a beta (TPM2) chain.

It is found in the cytoplasm. The protein localises to the cytoskeleton. Functionally, binds to actin filaments in muscle and non-muscle cells. Plays a central role, in association with the troponin complex, in the calcium dependent regulation of vertebrate striated muscle contraction. Smooth muscle contraction is regulated by interaction with caldesmon. In non-muscle cells is implicated in stabilizing cytoskeleton actin filaments. This Chelon auratus (Golden grey mullet) protein is Tropomyosin alpha-1 chain.